The chain runs to 802 residues: Phenylalanine--tRNA ligase beta subunit (802 aa).

A tRNA-binding domain is found at 40–155; it reads SASLKNVVVG…EHVETGVSAI (116 aa). Residues 409-484 enclose the B5 domain; that stretch reads KAVNKIETSL…RIYGYDEIPV (76 aa). Positions 462, 468, 471, and 472 each coordinate Mg(2+). The 94-residue stretch at 709–802 folds into the FDX-ACB domain; it reads PRYPEMTRDL…LQAKLHAIIR (94 aa).

This sequence belongs to the phenylalanyl-tRNA synthetase beta subunit family. Type 1 subfamily. In terms of assembly, tetramer of two alpha and two beta subunits. Mg(2+) is required as a cofactor.

The protein localises to the cytoplasm. It catalyses the reaction tRNA(Phe) + L-phenylalanine + ATP = L-phenylalanyl-tRNA(Phe) + AMP + diphosphate + H(+). The polypeptide is Phenylalanine--tRNA ligase beta subunit (Listeria innocua serovar 6a (strain ATCC BAA-680 / CLIP 11262)).